The sequence spans 246 residues: Pyridoxine 5'-phosphate synthase (246 aa).

Asparagine 6 is a binding site for 3-amino-2-oxopropyl phosphate. Position 8–9 (8–9 (DH)) interacts with 1-deoxy-D-xylulose 5-phosphate. Residue arginine 17 participates in 3-amino-2-oxopropyl phosphate binding. The active-site Proton acceptor is histidine 49. 1-deoxy-D-xylulose 5-phosphate-binding residues include arginine 51 and histidine 56. Glutamate 76 serves as the catalytic Proton acceptor. Threonine 106 is a 1-deoxy-D-xylulose 5-phosphate binding site. The active-site Proton donor is the histidine 196. 3-amino-2-oxopropyl phosphate is bound by residues glycine 197 and 219 to 220 (GH).

This sequence belongs to the PNP synthase family. As to quaternary structure, homooctamer; tetramer of dimers.

Its subcellular location is the cytoplasm. It carries out the reaction 3-amino-2-oxopropyl phosphate + 1-deoxy-D-xylulose 5-phosphate = pyridoxine 5'-phosphate + phosphate + 2 H2O + H(+). The protein operates within cofactor biosynthesis; pyridoxine 5'-phosphate biosynthesis; pyridoxine 5'-phosphate from D-erythrose 4-phosphate: step 5/5. Catalyzes the complicated ring closure reaction between the two acyclic compounds 1-deoxy-D-xylulose-5-phosphate (DXP) and 3-amino-2-oxopropyl phosphate (1-amino-acetone-3-phosphate or AAP) to form pyridoxine 5'-phosphate (PNP) and inorganic phosphate. The sequence is that of Pyridoxine 5'-phosphate synthase from Akkermansia muciniphila (strain ATCC BAA-835 / DSM 22959 / JCM 33894 / BCRC 81048 / CCUG 64013 / CIP 107961 / Muc).